A 200-amino-acid polypeptide reads, in one-letter code: Diadenylate cyclase (200 aa).

Residues Ile5 to Ala25 traverse the membrane as a helical segment. Residues Asn28–Asn185 enclose the DAC domain.

Belongs to the adenylate cyclase family. DacB/CdaS subfamily. As to quaternary structure, probably oligomerizes.

It localises to the cell membrane. It carries out the reaction 2 ATP = 3',3'-c-di-AMP + 2 diphosphate. In terms of biological role, catalyzes the condensation of 2 ATP molecules into cyclic di-AMP (c-di-AMP), a second messenger used to regulate differing processes in different bacteria. This chain is Diadenylate cyclase, found in Mycoplasma genitalium (strain ATCC 33530 / DSM 19775 / NCTC 10195 / G37) (Mycoplasmoides genitalium).